A 304-amino-acid chain; its full sequence is Homoserine O-acetyltransferase (304 aa).

Cys142 functions as the Acyl-thioester intermediate in the catalytic mechanism. Positions 163 and 191 each coordinate substrate. The active-site Proton acceptor is the His234. Glu236 is an active-site residue. Arg248 is a substrate binding site.

It belongs to the MetA family.

The protein resides in the cytoplasm. It carries out the reaction L-homoserine + acetyl-CoA = O-acetyl-L-homoserine + CoA. Its pathway is amino-acid biosynthesis; L-methionine biosynthesis via de novo pathway; O-acetyl-L-homoserine from L-homoserine: step 1/1. Functionally, transfers an acetyl group from acetyl-CoA to L-homoserine, forming acetyl-L-homoserine. This is Homoserine O-acetyltransferase from Thermotoga neapolitana (strain ATCC 49049 / DSM 4359 / NBRC 107923 / NS-E).